Here is a 577-residue protein sequence, read N- to C-terminus: Maltase A1 (577 aa).

Positions 1–19 are cleaved as a signal peptide; the sequence is MRPQSAACLLLAIVGFVGA. Residues asparagine 119 and asparagine 151 are each glycosylated (N-linked (GlcNAc...) asparagine). Aspartate 221 serves as the catalytic Nucleophile. A glycan (N-linked (GlcNAc...) asparagine) is linked at asparagine 244. Glutamate 297 (proton donor) is an active-site residue. Asparagine 315 and asparagine 331 each carry an N-linked (GlcNAc...) asparagine glycan.

The protein belongs to the glycosyl hydrolase 13 family.

The catalysed reaction is Hydrolysis of terminal, non-reducing (1-&gt;4)-linked alpha-D-glucose residues with release of alpha-D-glucose.. The protein is Maltase A1 (Mal-A1) of Drosophila melanogaster (Fruit fly).